The chain runs to 126 residues: Large ribosomal subunit protein uL22 (126 aa).

It belongs to the universal ribosomal protein uL22 family. In terms of assembly, part of the 50S ribosomal subunit.

Functionally, this protein binds specifically to 23S rRNA; its binding is stimulated by other ribosomal proteins, e.g. L4, L17, and L20. It is important during the early stages of 50S assembly. It makes multiple contacts with different domains of the 23S rRNA in the assembled 50S subunit and ribosome. Its function is as follows. The globular domain of the protein is located near the polypeptide exit tunnel on the outside of the subunit, while an extended beta-hairpin is found that lines the wall of the exit tunnel in the center of the 70S ribosome. This is Large ribosomal subunit protein uL22 from Dinoroseobacter shibae (strain DSM 16493 / NCIMB 14021 / DFL 12).